Here is a 61-residue protein sequence, read N- to C-terminus: Small ribosomal subunit protein uS14 (61 aa).

Zn(2+) contacts are provided by Cys-24, Cys-27, Cys-40, and Cys-43.

Belongs to the universal ribosomal protein uS14 family. Zinc-binding uS14 subfamily. As to quaternary structure, part of the 30S ribosomal subunit. Contacts proteins S3 and S10. Requires Zn(2+) as cofactor.

Functionally, binds 16S rRNA, required for the assembly of 30S particles and may also be responsible for determining the conformation of the 16S rRNA at the A site. This Desulfovibrio desulfuricans (strain ATCC 27774 / DSM 6949 / MB) protein is Small ribosomal subunit protein uS14.